We begin with the raw amino-acid sequence, 314 residues long: Trihelix transcription factor ASR3 (314 aa).

The disordered stretch occupies residues 1–34 (MALEQLGLGVSAVDGGENSSAPSNDGGDDGVKTA). Residues 38–104 (RWTRQEILVL…QCRKRWSNLA (67 aa)) form the Myb-like domain. Residues 84 to 91 (CKRHGVNR) carry the Nuclear localization signal motif. The short motif at 161-165 (LSLGL) is the EAR 1 element. Thr-189 is subject to Phosphothreonine; by MAPK4. Residues 207–255 (CVADQGRVKEKQPEAANVEGGSTSQEERKRKRTSFGEKEEEEEEGETKK) form a disordered region. Positions 280–284 (LNLKL) match the EAR 2 motif.

In terms of assembly, homodimer. Interacts directly with MPK4. In terms of processing, phosphorylated on Thr-189 by MPK4 in response to microbe-associated molecular patterns (MAMPs, e.g. flg22, elf18, chitin, and LPS). This phosphorylation enhances DNA-binding and thus negatively regulates immune gene expression.

It is found in the nucleus. Transcriptional repressor that binds DNA and plays a negative role in regulating microbe-associated molecular patterns-(MAMPs, e.g. flg22, elf18, chitin, and LPS) triggered immunity (PTI) by negatively regulating immune gene expression. In Arabidopsis thaliana (Mouse-ear cress), this protein is Trihelix transcription factor ASR3.